Reading from the N-terminus, the 238-residue chain is Ribonuclease PH (238 aa).

Residues R86 and 124-126 (GTR) each bind phosphate.

It belongs to the RNase PH family. As to quaternary structure, homohexameric ring arranged as a trimer of dimers.

It carries out the reaction tRNA(n+1) + phosphate = tRNA(n) + a ribonucleoside 5'-diphosphate. In terms of biological role, phosphorolytic 3'-5' exoribonuclease that plays an important role in tRNA 3'-end maturation. Removes nucleotide residues following the 3'-CCA terminus of tRNAs; can also add nucleotides to the ends of RNA molecules by using nucleoside diphosphates as substrates, but this may not be physiologically important. Probably plays a role in initiation of 16S rRNA degradation (leading to ribosome degradation) during starvation. The chain is Ribonuclease PH from Enterobacter sp. (strain 638).